Consider the following 511-residue polypeptide: MAGELYKWIMDATAGAPLPFSLALVAAAFVLYNIVSIITTAYFSPLSKIPGPWYAKLTDLRLTYSVFAGNRIYYVDSLHQKYGPMVRIGPKEVDVADPAAAREVHRMGTVFTKAPFYRLLSPGPVDNIFNFRDQKKHSQRRKLYAKGFTLVELRKNWESTINKTISMAVQKMKEEAANGDTELMGWWTLMANEIVCRLTFNGGHGTVEKGIKDPFVLMLEKRKGDLAHLLKMFIPPLYYVGRVLGKVNTRMNDIFYSQEKMFKAGAGVVKSARQDKEAGEFNQNLFAKALQEGEGDAATLTDTDIITDAGALLLAGSDPTAISLTFLIYLVLSRPELQKQLEEEVASIDGEVTDTVCEGLPLMNAIIDESMRLYGAAPGGLPRSPPAGGANLGGYYIPEGTVVDTQNWTLHTDGATWKEAQTFDHTRFLPENRLEFSEKQKMAFNPFGQGSRQCLGIHLGRLEMRLAVAHFFRELRGVKLAKSATPESMAVVDSFVAGVPRDRRCEVTMKA.

A helical transmembrane segment spans residues 18-38; sequence LPFSLALVAAAFVLYNIVSII. N-linked (GlcNAc...) asparagine glycans are attached at residues N162 and N407. Residue C454 participates in heme binding.

Belongs to the cytochrome P450 family. Heme is required as a cofactor.

The protein localises to the membrane. It participates in mycotoxin biosynthesis. Its function is as follows. Cytochrome P450 monooxygenase; part of the fragmented gene cluster that mediates the biosynthesis of dothistromin (DOTH), a polyketide toxin very similar in structure to the aflatoxin precursor, versicolorin B. The first step of the pathway is the conversion of acetate to norsolorinic acid (NOR) and requires the fatty acid synthase subunits hexA and hexB, as well as the polyketide synthase pksA. PksA combines a hexanoyl starter unit and 7 malonyl-CoA extender units to synthesize the precursor NOR. The hexanoyl starter unit is provided to the acyl-carrier protein (ACP) domain by the fungal fatty acid synthase hexA/hexB. The second step is the conversion of NOR to averantin (AVN) and requires the norsolorinic acid ketoreductase nor1, which catalyzes the dehydration of norsolorinic acid to form (1'S)-averantin. The cytochrome P450 monooxygenase avnA then catalyzes the hydroxylation of AVN to 5'hydroxyaverantin (HAVN). The next step is performed by adhA that transforms HAVN to averufin (AVF). Averufin might then be converted to hydroxyversicolorone by cypX and avfA. Hydroxyversicolorone is further converted versiconal hemiacetal acetate (VHA) by moxY. VHA is then the substrate for the versiconal hemiacetal acetate esterase est1 to yield versiconal (VAL). Versicolorin B synthase vbsA then converts VAL to versicolorin B (VERB) by closing the bisfuran ring. Then, the activity of the versicolorin B desaturase verB leads to versicolorin A (VERA). DotB, a predicted chloroperoxidase, may perform epoxidation of the A-ring of VERA. Alternatively, a cytochrome P450, such as cypX or avnA could catalyze this step. It is also possible that another, uncharacterized, cytochrome P450 enzyme is responsible for this step. Opening of the epoxide could potentially be achieved by the epoxide hydrolase epoA. However, epoA seems not to be required for DOTH biosynthesis, but other epoxide hydrolases may have the ability to complement this hydrolysis. Alternatively, opening of the epoxide ring could be achieved non-enzymatically. The next step is the deoxygenation of ring A to yield the 5,8-dihydroxyanthraquinone which is most likely catalyzed by the NADPH dehydrogenase encoded by ver1. The last stages of DOTH biosynthesis are proposed to involve hydroxylation of the bisfuran. OrdB and norB might have oxidative roles here. An alternative possibility is that cytochrome P450 monoogenases such as avnA and cypX might perform these steps in addition to previously proposed steps. The protein is Cytochrome P450 monooxygenase cypX of Dothistroma septosporum (Red band needle blight fungus).